The following is a 127-amino-acid chain: Class I hydrophobin 1 (127 aa).

The signal sequence occupies residues 1–20 (MLSLLSKAVSLAILVTAVVA). Disulfide bonds link C53/C108, C60/C102, C61/C94, and C109/C122. N-linked (GlcNAc...) asparagine glycosylation occurs at N66.

It belongs to the fungal hydrophobin family. As to quaternary structure, self-assembles to form functional amyloid fibrils called rodlets. Self-assembly into fibrillar rodlets occurs spontaneously at hydrophobic:hydrophilic interfaces and the rodlets further associate laterally to form amphipathic monolayers. Expressed everywhere in the mycelial tissues of developing fruiting bodies except for the top parts of the pileus (cap) and for the prehymenophore; but high level of the transcript is detected in the parts surrounding the prehymenophore.

The protein resides in the secreted. The protein localises to the cell wall. Aerial growth, conidiation, and dispersal of filamentous fungi in the environment rely upon a capability of their secreting small amphipathic proteins called hydrophobins (HPBs) with low sequence identity. Class I can self-assemble into an outermost layer of rodlet bundles on aerial cell surfaces, conferring cellular hydrophobicity that supports fungal growth, development and dispersal; whereas Class II form highly ordered films at water-air interfaces through intermolecular interactions but contribute nothing to the rodlet structure. Hyd1 is a class I hydrophobin that plays a role in fruiting body initiation rather than in mature fruit body maintenance. Seems to be involved in the formation in the extracellular matrix of lined air channels with a hydrophobic membrane. These channels may help to provide gas exchange during respiration in mycelial tissues of developing fruiting bodies and are formed all over the mycelial tissues of these developing fruiting bodies except for the top parts of the pileus (cap) and for the prehymenophore. This is Class I hydrophobin 1 from Lentinula edodes (Shiitake mushroom).